The chain runs to 487 residues: Glutamate--tRNA ligase (487 aa).

A 'HIGH' region motif is present at residues 13-23; the sequence is PSPTGLFHIGG. The 'KMSKS' region motif lies at 255 to 259; it reads KLSKR. K258 contributes to the ATP binding site.

It belongs to the class-I aminoacyl-tRNA synthetase family. Glutamate--tRNA ligase type 1 subfamily. In terms of assembly, monomer.

Its subcellular location is the cytoplasm. The catalysed reaction is tRNA(Glu) + L-glutamate + ATP = L-glutamyl-tRNA(Glu) + AMP + diphosphate. In terms of biological role, catalyzes the attachment of glutamate to tRNA(Glu) in a two-step reaction: glutamate is first activated by ATP to form Glu-AMP and then transferred to the acceptor end of tRNA(Glu). The protein is Glutamate--tRNA ligase of Malacoplasma penetrans (strain HF-2) (Mycoplasma penetrans).